The chain runs to 511 residues: MTNTIVISCLHNIAAILYCGQIQKLVVANAHYQVSDIYLGTVDKIFSGINAAFVDLGKNEYSGFIHISDTGPLKKKYYINNITNILTIRQKILVQIIKEPTLNKGPRLTANITLSGRYIVLMPFSQAICISRKIYDEDERHYLKALAILIKPPTMGLLFRPSAIGIDEEIILSELTNLKEQWYFIQKSAINNCAPVLLYKDEDIVKKVIRDFYDNNTKNIVIDSNLGLKQLNYYINTWQCNFSSTIPSLQLYSSNKCILDTFRINQAISRALIPKVDLILGGYMFIETLEAFTIIDVNSGSFNNSTSARETVLKTNCSAATEIAYQLKIRNIAGVIIIDFIDMESQRDQLQLLEHFDKELSLDDAKPQIVQLSELGLVELTRRRKGKSLYELVSNDSNYFHFFIQLEQLDSIKPSSYKSKRLSSSVKSWLFSEIDMINRVFFKKSNLYRLSNFYYARNLYIIYSDFTVNKNIQLAARYKLMYSLQNIQILPSTWYFNFLDIHTNNITNYLS.

The S1 motif domain maps to 35 to 117 (SDIYLGTVDK…LTANITLSGR (83 aa)). D296 and D339 together coordinate Mg(2+).

Belongs to the RNase E/G family. Requires Mg(2+) as cofactor.

The protein localises to the plastid. It localises to the chloroplast stroma. In terms of biological role, involved in intercistronic processing of primary transcripts from chloroplast operons. The endonucleolytic activity of the enzyme depends on the number of phosphates at the 5' end, is inhibited by structured RNA, and preferentially cleaves A/U-rich sequences. The polypeptide is Ribonuclease E/G-like protein (rne) (Porphyra purpurea (Red seaweed)).